The sequence spans 257 residues: Zinc transporter ZupT (257 aa).

Transmembrane regions (helical) follow at residues 5 to 25 (LILT…GVLG), 32 to 52 (LLAF…LMEM), 61 to 81 (GMSP…YLGL), 109 to 129 (AILL…ATFV), 137 to 157 (LGFG…LAVV), 171 to 191 (ILWA…AWLI), 195 to 215 (MISP…MVAL), and 236 to 256 (GVLC…TAGI). Fe(2+) is bound by residues Asn120 and Glu123. Zn(2+)-binding residues include Glu123 and His148. 3 residues coordinate Fe(2+): Asn149, Glu152, and Glu181. Zn(2+) is bound at residue Glu152.

Belongs to the ZIP transporter (TC 2.A.5) family. ZupT subfamily.

It localises to the cell inner membrane. The catalysed reaction is Zn(2+)(in) = Zn(2+)(out). In terms of biological role, mediates zinc uptake. May also transport other divalent cations. The protein is Zinc transporter ZupT of Shigella dysenteriae serotype 1 (strain Sd197).